The chain runs to 291 residues: Formamidopyrimidine-DNA glycosylase (291 aa).

Proline 2 acts as the Schiff-base intermediate with DNA in catalysis. Catalysis depends on glutamate 3, which acts as the Proton donor. The active-site Proton donor; for beta-elimination activity is the lysine 60. Positions 108 and 127 each coordinate DNA. The FPG-type zinc finger occupies 257–291; that stretch reads WVYRRGGQACRICSTPIRRESLCGRGTHWCPNCQR. Arginine 281 (proton donor; for delta-elimination activity) is an active-site residue.

The protein belongs to the FPG family. As to quaternary structure, monomer. Zn(2+) is required as a cofactor.

The catalysed reaction is Hydrolysis of DNA containing ring-opened 7-methylguanine residues, releasing 2,6-diamino-4-hydroxy-5-(N-methyl)formamidopyrimidine.. It catalyses the reaction 2'-deoxyribonucleotide-(2'-deoxyribose 5'-phosphate)-2'-deoxyribonucleotide-DNA = a 3'-end 2'-deoxyribonucleotide-(2,3-dehydro-2,3-deoxyribose 5'-phosphate)-DNA + a 5'-end 5'-phospho-2'-deoxyribonucleoside-DNA + H(+). Its function is as follows. Involved in base excision repair of DNA damaged by oxidation or by mutagenic agents. Acts as a DNA glycosylase that recognizes and removes damaged bases. Has a preference for oxidized purines, such as 7,8-dihydro-8-oxoguanine (8-oxoG). Has AP (apurinic/apyrimidinic) lyase activity and introduces nicks in the DNA strand. Cleaves the DNA backbone by beta-delta elimination to generate a single-strand break at the site of the removed base with both 3'- and 5'-phosphates. This chain is Formamidopyrimidine-DNA glycosylase, found in Prochlorococcus marinus (strain MIT 9313).